The following is a 61-amino-acid chain: Large ribosomal subunit protein uL30 (61 aa).

Belongs to the universal ribosomal protein uL30 family. In terms of assembly, part of the 50S ribosomal subunit.

This is Large ribosomal subunit protein uL30 from Legionella pneumophila (strain Paris).